A 477-amino-acid polypeptide reads, in one-letter code: Membrane-bound lytic murein transglycosylase F (477 aa).

Positions 1-22 (MTRFLLIIILGFLLTACQQVTV) are cleaved as a signal peptide. The interval 23-257 (DEPEFVPHQL…HLNEKYFGHV (235 aa)) is non-LT domain. Positions 258-477 (KRFDYIDTRA…AGSLSPDQPK (220 aa)) are LT domain. The active site involves Glu-302. Positions 446 to 477 (SKQPMPEDEQNDLIAEELPSMPAGSLSPDQPK) are disordered. The span at 451–460 (PEDEQNDLIA) shows a compositional bias: acidic residues.

This sequence in the N-terminal section; belongs to the bacterial solute-binding protein 3 family. It in the C-terminal section; belongs to the transglycosylase Slt family.

Its subcellular location is the cell outer membrane. It carries out the reaction Exolytic cleavage of the (1-&gt;4)-beta-glycosidic linkage between N-acetylmuramic acid (MurNAc) and N-acetylglucosamine (GlcNAc) residues in peptidoglycan, from either the reducing or the non-reducing ends of the peptidoglycan chains, with concomitant formation of a 1,6-anhydrobond in the MurNAc residue.. Its function is as follows. Murein-degrading enzyme that degrades murein glycan strands and insoluble, high-molecular weight murein sacculi, with the concomitant formation of a 1,6-anhydromuramoyl product. Lytic transglycosylases (LTs) play an integral role in the metabolism of the peptidoglycan (PG) sacculus. Their lytic action creates space within the PG sacculus to allow for its expansion as well as for the insertion of various structures such as secretion systems and flagella. The chain is Membrane-bound lytic murein transglycosylase F from Shewanella sp. (strain W3-18-1).